The primary structure comprises 121 residues: Large ribosomal subunit protein uL14 (121 aa).

This sequence belongs to the universal ribosomal protein uL14 family. Part of the 50S ribosomal subunit. Forms a cluster with proteins L3 and L19. In the 70S ribosome, L14 and L19 interact and together make contacts with the 16S rRNA in bridges B5 and B8.

Functionally, binds to 23S rRNA. Forms part of two intersubunit bridges in the 70S ribosome. The chain is Large ribosomal subunit protein uL14 from Prochlorococcus marinus (strain MIT 9211).